Here is a 724-residue protein sequence, read N- to C-terminus: MWTQKWHKYYTAQVDENDCGLAALNMILKYYGSDYMLAHLRQLAKTTADGTTVLGLVKAAKHLNLNAEAVRADMDALTASQLPLPVIVHVFKKNKLPHYYVVYQVTENDLIIGDPDPTVKTTKISKSQFAKEWTQIAIIIAPTVKYKPIKESRHTLIDLVPLLIKQKRLIGLIITAAAITTLISIAGAYFFQLIIDTYLPHLMTNRLSLVAIGLIVAYAFQAIINYIQSFFTIVLGQRLMIDIVLKYVHHLFDLPMNFFTTRHVGEMTSRFSDASKIIDALGSTTLTLFLDMWILLAVGLFLAYQNINLFLCSLVVVPIYISIVWLFKKTFNRLNQDTMESNAVLNSAIIESLSGIETIKSLTGEATTKKKIDTLFSDLLHKNLAYQKADQGQQAIKAATKLILTIVILWWGTFFVMRHQLSLGQLLTYNALLAYFLTPLENIINLQPKLQAARVANNRLNEVYLVESEFSKSREITALEQLNGDIEVNHVSFNYGYCSNILEDVSLTIPHHQKITIVGMSGSGKTTLAKLLVGFFEPQEQHGEIQINHHNISDISRTILRQYINYVPQEPFIFSGSVLENLLLGSRPGVTQQMIDQACSFAEIKTDIENLPQGYHTRLSESGFNLSGGQKQRLSIARALLSPAQCFIFDESTSNLDTITEHKIVSKLLFMKDKTIIFVAHRLNIASQTDKVVVLDHGKIVEQGSHRQLLNYNGYYARLIHNQE.

The Peptidase C39 domain maps to 13–140 (QVDENDCGLA…KEWTQIAIII (128 aa)). Residue cysteine 19 is part of the active site. 6 helical membrane-spanning segments follow: residues 170–190 (IGLIITAAAITTLISIAGAYF), 207–227 (LSLVAIGLIVAYAFQAIINYI), 284–304 (TTLTLFLDMWILLAVGLFLAY), 307–327 (INLFLCSLVVVPIYISIVWLF), 396–416 (IKAATKLILTIVILWWGTFFV), and 426–446 (LLTYNALLAYFLTPLENIINL). The region spanning 170 to 452 (IGLIITAAAI…IINLQPKLQA (283 aa)) is the ABC transmembrane type-1 domain. Residues 486–722 (IEVNHVSFNY…NGYYARLIHN (237 aa)) enclose the ABC transporter domain. Residue 519 to 526 (GMSGSGKT) participates in ATP binding.

This sequence belongs to the ABC transporter superfamily. Pediocin PA-1 exporter (TC 3.A.1.112.2) family.

It is found in the cell membrane. Involved in the export process of the bacteriocin pediocin PA-1/AcH. Is also essential for pediocin production. The polypeptide is Pediocin PA-1 transport/processing ATP-binding protein PedD (pedD) (Pediococcus acidilactici).